The chain runs to 226 residues: Brachyurin (226 aa).

The Peptidase S1 domain maps to 1–223 (IVGGVEAVPN…FLDWIQTQTG (223 aa)). Cys26 and Cys42 are disulfide-bonded. Residues His41 and Asp87 each act as charge relay system in the active site. Cystine bridges form between Cys151–Cys164 and Cys174–Cys200. The active-site Charge relay system is Ser178.

This sequence belongs to the peptidase S1 family.

It carries out the reaction Hydrolysis of proteins, with broad specificity for peptide bonds. Native collagen is cleaved about 75% of the length of the molecule from the N-terminus. Low activity on small molecule substrates of both trypsin and chymotrypsin.. This enzyme is a serine protease capable of degrading the native triple helix of collagen. This Leptuca pugilator (Atlantic sand fiddler crab) protein is Brachyurin.